Consider the following 167-residue polypeptide: Translationally-controlled tumor protein homolog (167 aa).

A TCTP domain is found at 1–167 (MIIYTDIISG…WKHGVKAEKI (167 aa)).

The protein belongs to the TCTP family.

The protein resides in the cytoplasm. Its subcellular location is the cytoskeleton. Its function is as follows. Involved in protein synthesis. Involved in microtubule stabilization. The chain is Translationally-controlled tumor protein homolog from Kluyveromyces lactis (strain ATCC 8585 / CBS 2359 / DSM 70799 / NBRC 1267 / NRRL Y-1140 / WM37) (Yeast).